The following is a 208-amino-acid chain: uncharacterized protein (208 aa).

Residues 118–134 (QYPNQYQQQPQQQQPGY) are compositionally biased toward low complexity. The disordered stretch occupies residues 118 to 208 (QYPNQYQQQP…HKKEKNEIKE (91 aa)). The segment covering 138–175 (NYNQPPVQLNKQAYDNYQQNDYKSNNQPNLAKENNISN) has biased composition (polar residues). Basic residues predominate over residues 187-201 (KKEKKHSFFSKLHKK).

This is an uncharacterized protein from Dictyostelium discoideum (Social amoeba).